The primary structure comprises 259 residues: Pimeloyl-[acyl-carrier protein] methyl ester esterase (259 aa).

The AB hydrolase-1 domain maps to leucine 16–proline 244. Substrate is bound by residues tryptophan 22, serine 82–leucine 83, and phenylalanine 143–glutamine 147. Serine 82 functions as the Nucleophile in the catalytic mechanism. Catalysis depends on residues aspartate 207 and histidine 237. Histidine 237 provides a ligand contact to substrate.

It belongs to the AB hydrolase superfamily. Carboxylesterase BioH family. As to quaternary structure, monomer.

The protein resides in the cytoplasm. The enzyme catalyses 6-carboxyhexanoyl-[ACP] methyl ester + H2O = 6-carboxyhexanoyl-[ACP] + methanol + H(+). Its pathway is cofactor biosynthesis; biotin biosynthesis. The physiological role of BioH is to remove the methyl group introduced by BioC when the pimeloyl moiety is complete. It allows to synthesize pimeloyl-ACP via the fatty acid synthetic pathway through the hydrolysis of the ester bonds of pimeloyl-ACP esters. The chain is Pimeloyl-[acyl-carrier protein] methyl ester esterase from Wigglesworthia glossinidia brevipalpis.